The chain runs to 193 residues: dCTP deaminase (193 aa).

Residues 110–115 (RSSLAR), Asp-128, 136–138 (VLE), Tyr-171, Lys-178, and Gln-182 each bind dCTP. The Proton donor/acceptor role is filled by Glu-138. Residues 169-193 (RPYNSRQDAKYRGQQGAVASRIDKD) are disordered.

Belongs to the dCTP deaminase family. As to quaternary structure, homotrimer.

The enzyme catalyses dCTP + H2O + H(+) = dUTP + NH4(+). It functions in the pathway pyrimidine metabolism; dUMP biosynthesis; dUMP from dCTP (dUTP route): step 1/2. Its function is as follows. Catalyzes the deamination of dCTP to dUTP. The polypeptide is dCTP deaminase (Yersinia pestis bv. Antiqua (strain Antiqua)).